Consider the following 1547-residue polypeptide: Transposon Ty3-G Gag-Pol polyprotein (1547 aa).

S2 bears the N-acetylserine mark. The CCHC-type zinc-finger motif lies at 265–282 (RLCFYCKKEGHRLNECRA). D336 functions as the For protease activity; shared with dimeric partner in the catalytic mechanism. The region spanning 620–797 (LDNKFIVPSK…EETEFLGYSI (178 aa)) is the Reverse transcriptase domain. D686, D748, D749, D893, E936, and D961 together coordinate Mg(2+). Residues 893–1011 (DASKDGIGAV…VADAISRAVY (119 aa)) enclose the RNase H Ty3/gyspy-type domain. The integrase-type zinc finger-like stretch occupies residues 1106-1145 (HTLFGGHFGVTVTLAKISPIYYWPKLQHSIIQYIRTCVQC). The Integrase catalytic domain maps to 1159–1324 (LQPLPIAEGR…SPFEIDLGYL (166 aa)). Positions 1175 and 1236 each coordinate Mg(2+).

The protease is a homodimer, whose active site consists of two apposed aspartic acid residues. In terms of processing, initially, virus-like particles (VLPs) are composed of the structural unprocessed proteins Gag and Gag-Pol, and also contain the host initiator methionine tRNA (tRNA(i)-Met) which serves as a primer for minus-strand DNA synthesis, and a dimer of genomic Ty RNA. Processing of the polyproteins occurs within the particle and proceeds by an ordered pathway, called maturation. First, the protease (PR) is released by autocatalytic cleavage of the Gag-Pol polyprotein, and this cleavage is a prerequisite for subsequent processing at the remaining sites to release the mature structural and catalytic proteins. Maturation takes place prior to the RT reaction and is required to produce transposition-competent VLPs.

It localises to the cytoplasm. It is found in the nucleus. It carries out the reaction DNA(n) + a 2'-deoxyribonucleoside 5'-triphosphate = DNA(n+1) + diphosphate. The catalysed reaction is Endonucleolytic cleavage to 5'-phosphomonoester.. Functionally, capsid protein (CA) is the structural component of the virus-like particle (VLP), forming the shell that encapsulates the genomic RNA-nucleocapsid complex. In terms of biological role, nucleocapsid protein p11 (NC) forms the nucleocore that coats the retro-elements dimeric RNA. Binds these RNAs through its zinc fingers. Promotes primer tRNA(i)-Met annealing to the multipartite primer-binding site (PBS), dimerization of Ty3 RNA and initiation of reverse transcription. Its function is as follows. The aspartyl protease (PR) mediates the proteolytic cleavages of the Gag and Gag-Pol polyproteins after assembly of the VLP. Reverse transcriptase/ribonuclease H (RT) is a multifunctional enzyme that catalyzes the conversion of the retro-elements RNA genome into dsDNA within the VLP. The enzyme displays a DNA polymerase activity that can copy either DNA or RNA templates, and a ribonuclease H (RNase H) activity that cleaves the RNA strand of RNA-DNA heteroduplexes during plus-strand synthesis and hydrolyzes RNA primers. The conversion leads to a linear dsDNA copy of the retrotransposon that includes long terminal repeats (LTRs) at both ends. Functionally, integrase (IN) targets the VLP to the nucleus, where a subparticle preintegration complex (PIC) containing at least integrase and the newly synthesized dsDNA copy of the retrotransposon must transit the nuclear membrane. Once in the nucleus, integrase performs the integration of the dsDNA into the host genome. The polypeptide is Transposon Ty3-G Gag-Pol polyprotein (TY3B-G) (Saccharomyces cerevisiae (strain ATCC 204508 / S288c) (Baker's yeast)).